Consider the following 488-residue polypeptide: Argininosuccinate lyase (488 aa).

It belongs to the lyase 1 family. Argininosuccinate lyase subfamily.

Its subcellular location is the cytoplasm. It carries out the reaction 2-(N(omega)-L-arginino)succinate = fumarate + L-arginine. It participates in amino-acid biosynthesis; L-arginine biosynthesis; L-arginine from L-ornithine and carbamoyl phosphate: step 3/3. The sequence is that of Argininosuccinate lyase from Corynebacterium jeikeium (strain K411).